The chain runs to 418 residues: Putative ion-transport protein YfeO (418 aa).

The next 10 helical transmembrane spans lie at 15–37, 57–79, 99–118, 149–171, 186–208, 221–243, 258–280, 301–323, 343–363, and 376–398; these read PAVA…ASVL, LWII…FSQG, ALPR…VSLG, ILAS…LIFS, LFAP…HPHF, TDIL…AVWC, VLVL…PVSL, YFLL…FRGG, VPAV…VLVV, and VVVP…WLLL.

This sequence belongs to the chloride channel (TC 2.A.49) family.

It localises to the cell membrane. This Shigella flexneri protein is Putative ion-transport protein YfeO (yfeO).